The following is a 152-amino-acid chain: Ribosome maturation factor RimP (152 aa).

It belongs to the RimP family.

It is found in the cytoplasm. Its function is as follows. Required for maturation of 30S ribosomal subunits. The sequence is that of Ribosome maturation factor RimP from Paraburkholderia phymatum (strain DSM 17167 / CIP 108236 / LMG 21445 / STM815) (Burkholderia phymatum).